Here is a 398-residue protein sequence, read N- to C-terminus: Maltoporin (398 aa).

Residues 1–30 (MTDKNNKRLFKVAPLATAIAASLFTVNASA) form the signal peptide.

The protein belongs to the porin LamB (TC 1.B.3) family. In terms of assembly, homotrimer formed of three 18-stranded antiparallel beta-barrels, containing three independent channels.

It is found in the cell outer membrane. It carries out the reaction beta-maltose(in) = beta-maltose(out). In terms of biological role, involved in the transport of maltose and maltodextrins. The chain is Maltoporin from Hahella chejuensis (strain KCTC 2396).